A 295-amino-acid polypeptide reads, in one-letter code: Small ribosomal subunit protein uS2 (295 aa).

It belongs to the universal ribosomal protein uS2 family.

This chain is Small ribosomal subunit protein uS2, found in Rickettsia typhi (strain ATCC VR-144 / Wilmington).